A 381-amino-acid polypeptide reads, in one-letter code: Anhydro-N-acetylmuramic acid kinase (381 aa).

Residue 13–20 (GTSLDGID) coordinates ATP.

Belongs to the anhydro-N-acetylmuramic acid kinase family.

It catalyses the reaction 1,6-anhydro-N-acetyl-beta-muramate + ATP + H2O = N-acetyl-D-muramate 6-phosphate + ADP + H(+). It participates in amino-sugar metabolism; 1,6-anhydro-N-acetylmuramate degradation. Its pathway is cell wall biogenesis; peptidoglycan recycling. Its function is as follows. Catalyzes the specific phosphorylation of 1,6-anhydro-N-acetylmuramic acid (anhMurNAc) with the simultaneous cleavage of the 1,6-anhydro ring, generating MurNAc-6-P. Is required for the utilization of anhMurNAc either imported from the medium or derived from its own cell wall murein, and thus plays a role in cell wall recycling. This chain is Anhydro-N-acetylmuramic acid kinase, found in Francisella tularensis subsp. novicida (strain U112).